A 112-amino-acid polypeptide reads, in one-letter code: Large ribosomal subunit protein mL53 (112 aa).

This sequence belongs to the mitochondrion-specific ribosomal protein mL53 family. As to quaternary structure, component of the mitochondrial large ribosomal subunit (mt-LSU). Mature mammalian 55S mitochondrial ribosomes consist of a small (28S) and a large (39S) subunit. The 28S small subunit contains a 12S ribosomal RNA (12S mt-rRNA) and 30 different proteins. The 39S large subunit contains a 16S rRNA (16S mt-rRNA), a copy of mitochondrial valine transfer RNA (mt-tRNA(Val)), which plays an integral structural role, and 52 different proteins. mL53 is located at the L7/L12 stalk.

It is found in the mitochondrion. In Homo sapiens (Human), this protein is Large ribosomal subunit protein mL53 (MRPL53).